We begin with the raw amino-acid sequence, 446 residues long: Iroquois homeobox protein 5a (446 aa).

The segment at residues 117–173 (NATRDATATLKAWLNEHRKNPYPTKGEKIMLAIITKMTLTQVSTWFANARRRLKKEN) is a DNA-binding region (homeobox). A disordered region spans residues 175-312 (MTWTPRNRSE…IHSPPSAPKP (138 aa)). Positions 184–201 (EDEEEDENIDLEKNDDDE) are enriched in acidic residues. Basic and acidic residues-rich tracts occupy residues 202 to 220 (PNKP…DHKL) and 227 to 258 (PCDR…RTDL). Polar residues-rich tracts occupy residues 264-274 (KPTTSSPSVLQ) and 293-303 (STGNSNVTSVI).

This sequence belongs to the TALE/IRO homeobox family.

It localises to the nucleus. Functionally, transcription factor. Binds to consensus iroquois binding site (IBS) motifs 5'-ACANNTGT-3' or 5'-ACANNNTGT-3' in regulatory elements of target genes. Required, together with irx7, for hyoid joint formation; they act cell autonomously to repress expression of cartilage matrix genes, such as collagen col2a1a, within immature chondrocytes of the joint interzone. May compete with or modify Sox9a activity, thereby reducing Sox9a-mediated activation of col2a1a. Probably acts in the developing hyoid joint downstream of Bmp signaling. In concert with irx6a, plays a role in visual performance. The polypeptide is Iroquois homeobox protein 5a (irx5a) (Danio rerio (Zebrafish)).